Here is a 337-residue protein sequence, read N- to C-terminus: Pseudouridine-5'-phosphate glycosidase (337 aa).

Catalysis depends on Glu26, which acts as the Proton donor. Substrate is bound by residues Lys87 and Val107. Residue Asp139 participates in Mn(2+) binding. 141 to 143 (SAD) contacts substrate. Lys160 (nucleophile) is an active-site residue. Residues 306 to 325 (SSGPQAGAGAPGAEPGPARR) are compositionally biased toward low complexity. Residues 306-337 (SSGPQAGAGAPGAEPGPARRTSPARAPSGEGW) are disordered.

It belongs to the pseudouridine-5'-phosphate glycosidase family. Homotrimer. It depends on Mn(2+) as a cofactor.

The enzyme catalyses D-ribose 5-phosphate + uracil = psi-UMP + H2O. Its function is as follows. Catalyzes the reversible cleavage of pseudouridine 5'-phosphate (PsiMP) to ribose 5-phosphate and uracil. Functions biologically in the cleavage direction, as part of a pseudouridine degradation pathway. This chain is Pseudouridine-5'-phosphate glycosidase, found in Methylobacterium nodulans (strain LMG 21967 / CNCM I-2342 / ORS 2060).